A 152-amino-acid chain; its full sequence is Large ribosomal subunit protein bL9 (152 aa).

This sequence belongs to the bacterial ribosomal protein bL9 family.

Binds to the 23S rRNA. The sequence is that of Large ribosomal subunit protein bL9 from Chlorobaculum tepidum (strain ATCC 49652 / DSM 12025 / NBRC 103806 / TLS) (Chlorobium tepidum).